The sequence spans 711 residues: BCLAF1 and THRAP3 family member 3 (711 aa).

The segment covering 1-15 has biased composition (basic residues); it reads MARSRSRSPRWKHRS. 2 disordered regions span residues 1–42 and 48–67; these read MARS…YRKD and AWRMDSEKHGQSKPRIPSRG. Serine 15 and serine 17 each carry phosphoserine. Positions 48-57 are enriched in basic and acidic residues; sequence AWRMDSEKHG. Phosphoserine occurs at positions 78, 80, and 187. Disordered stretches follow at residues 94–350 and 371–404; these read KPHR…KDSI and EKIKKEGDCRKESNSSSNQLDKSQKLPDVKPSPI. Composition is skewed to basic and acidic residues over residues 163–197, 204–213, 220–242, 296–311, 318–349, and 371–383; these read FRFEGKWHEDELRHQRIQEEKYSQSTRRGSEDFET, RYPEDRDFRK, RPKDVERYESREPARNPKWKPEH, SDGRTQKYCKEEDRKY, LNRELDCFNTGRGRETQDGQVKEPFKPSKKDS, and EKIKKEGDCRKES. Residue lysine 400 forms a Glycyl lysine isopeptide (Lys-Gly) (interchain with G-Cter in SUMO2) linkage. Phosphoserine is present on residues serine 402 and serine 578.

The protein belongs to the BCLAF1/THRAP3 family.

It localises to the mitochondrion. In Homo sapiens (Human), this protein is BCLAF1 and THRAP3 family member 3.